The chain runs to 536 residues: CBS domain-containing protein CBSCBSPB2 (536 aa).

The segment covering 1-23 (MTTTPTSSGRRSISSIRRTSSAS) has biased composition (low complexity). The segment at 1–60 (MTTTPTSSGRRSISSIRRTSSASKKPVLQSEESESGSGSINENTSKPDSPLAQPVSDGER) is disordered. CBS domains lie at 66–124 (RLSK…LRPE), 132–187 (MTRN…RMEK), 228–287 (VTEN…LSPE), and 295–354 (MTPN…NNSS). Positions 406–489 (VSSFAFKFED…KVLRLHLDFT (84 aa)) constitute a PB1 domain. The chain crosses the membrane as a helical span at residues 509-529 (VWWQTGVLAGAIVLTSIGLFV).

The protein localises to the membrane. This Arabidopsis thaliana (Mouse-ear cress) protein is CBS domain-containing protein CBSCBSPB2 (CBSCBSPB2).